The chain runs to 340 residues: 4-hydroxy-3-methylbut-2-enyl diphosphate reductase (340 aa).

A [4Fe-4S] cluster-binding site is contributed by Cys21. (2E)-4-hydroxy-3-methylbut-2-enyl diphosphate contacts are provided by His50 and His83. His50 and His83 together coordinate dimethylallyl diphosphate. Isopentenyl diphosphate-binding residues include His50 and His83. Cys105 serves as a coordination point for [4Fe-4S] cluster. Residue His133 participates in (2E)-4-hydroxy-3-methylbut-2-enyl diphosphate binding. His133 contributes to the dimethylallyl diphosphate binding site. Isopentenyl diphosphate is bound at residue His133. Catalysis depends on Glu135, which acts as the Proton donor. Residue Thr173 participates in (2E)-4-hydroxy-3-methylbut-2-enyl diphosphate binding. Cys203 serves as a coordination point for [4Fe-4S] cluster. (2E)-4-hydroxy-3-methylbut-2-enyl diphosphate-binding residues include Ser231, Ser232, Asn233, and Ser276. 4 residues coordinate dimethylallyl diphosphate: Ser231, Ser232, Asn233, and Ser276. Residues Ser231, Ser232, Asn233, and Ser276 each coordinate isopentenyl diphosphate. The interval 320–340 (KARGEPLTRSATAGDRMNADR) is disordered.

This sequence belongs to the IspH family. The cofactor is [4Fe-4S] cluster.

It carries out the reaction isopentenyl diphosphate + 2 oxidized [2Fe-2S]-[ferredoxin] + H2O = (2E)-4-hydroxy-3-methylbut-2-enyl diphosphate + 2 reduced [2Fe-2S]-[ferredoxin] + 2 H(+). The enzyme catalyses dimethylallyl diphosphate + 2 oxidized [2Fe-2S]-[ferredoxin] + H2O = (2E)-4-hydroxy-3-methylbut-2-enyl diphosphate + 2 reduced [2Fe-2S]-[ferredoxin] + 2 H(+). It functions in the pathway isoprenoid biosynthesis; dimethylallyl diphosphate biosynthesis; dimethylallyl diphosphate from (2E)-4-hydroxy-3-methylbutenyl diphosphate: step 1/1. It participates in isoprenoid biosynthesis; isopentenyl diphosphate biosynthesis via DXP pathway; isopentenyl diphosphate from 1-deoxy-D-xylulose 5-phosphate: step 6/6. Catalyzes the conversion of 1-hydroxy-2-methyl-2-(E)-butenyl 4-diphosphate (HMBPP) into a mixture of isopentenyl diphosphate (IPP) and dimethylallyl diphosphate (DMAPP). Acts in the terminal step of the DOXP/MEP pathway for isoprenoid precursor biosynthesis. The polypeptide is 4-hydroxy-3-methylbut-2-enyl diphosphate reductase (Acidothermus cellulolyticus (strain ATCC 43068 / DSM 8971 / 11B)).